We begin with the raw amino-acid sequence, 585 residues long: Glucose oxidase-like protein fsoC (585 aa).

Residue Ala-104 participates in FAD binding. Residue His-521 is the Proton donor of the active site. Catalysis depends on His-564, which acts as the Proton acceptor.

This sequence belongs to the GMC oxidoreductase family. Monomer. FAD is required as a cofactor.

Glucose oxidase-like protein; part of the gene cluster that mediates the biosynthesis of the enfumafungin-type antibiotic fuscoatroside. Four enzymes are sufficient to produce fuscoatroside: the terpene cyclase-glycosyl transferase fusion protein fsoAthe cytochrome P450 monoxygenases fsoD and fsoE, and the acetyltransferase fsoF; the cytochrome P450 monooxygenase fsoB and the glucose oxidase-like protein fsoC do not seem to play a role in biosynthesis of fuscoatroside. Functionally, glucose oxidase; part of the gene cluster that mediates the biosynthesis of the enfumafungin-type antibiotic, fuscoatroside. In Humicola fuscoatra, this protein is Glucose oxidase-like protein fsoC.